The sequence spans 734 residues: MSGFDDPGIFYSDSFGGDAQADEGQARKSQLQRRFKEFLRQYRVGTDRTGFTFKYRDELKRHYNLGEYWIEVEMEDLASFDEDLADYLYKQPAEHLQLLEEAAKEVADEVTRPRPSGEEVLQDIQVMLKSDASPSSIRSLKSDMMSHLVKIPGIIIAASAVRAKATRISIQCRSCRNTLTNIAMRPGLEGYALPRKCNTDQAGRPKCPLDPYFIMPDKCKCVDFQTLKLQELPDAVPHGEMPRHMQLYCDRYLCDKVVPGNRVTIMGIYSIKKFGLTTSRGRDRVGVGIRSSYIRVLGIQVDTDGSGRSFAGAVSPQEEEEFRRLAALPNVYEVISKSIAPSIFGGTDMKKAIACLLFGGSRKRLPDGLTRRGDINLLMLGDPGTAKSQLLKFVEKCSPIGVYTSGKGSSAAGLTASVMRDPSSRNFIMEGGAMVLADGGVVCIDEFDKMREDDRVAIHEAMEQQTISIAKAGITTTLNSRCSVLAAANSVFGRWDETKGEDNIDFMPTILSRFDMIFIVKDEHNEERDVMLAKHVITLHVSALTQTQAVEGEIDLAKLKKFIAYCRVKCGPRLSAEAAEKLKNRYIIMRSGARQHERDSDRRSSIPITVRQLEAIVRIAEALSKMKLQPFATEADVEEALRLFQVSTLDAALSGTLSGVEGFTSQEDQEMLSRIEKQLKRRFAIGSQVSEHSIIKDFTKQKYPEHAIHKVLQLMLRRGEIQHRMQRKVLYRLK.

Serine 2 carries the N-acetylserine modification. Serine 315 is subject to Phosphoserine. An MCM domain is found at 331 to 537 (VYEVISKSIA…RDVMLAKHVI (207 aa)). Arginine 371 serves as a coordination point for ADP. An N6-acetyllysine mark is found at lysine 392 and lysine 396. Residue serine 605 is modified to Phosphoserine. Lysine 696 is modified (N6-acetyllysine).

This sequence belongs to the MCM family. In terms of assembly, component of the MCM2-7 complex. The complex forms a toroidal hexameric ring with the proposed subunit order MCM2-MCM6-MCM4-MCM7-MCM3-MCM5. Component of the CMG helicase complex, a hexameric ring of related MCM2-7 subunits stabilized by CDC45 and the tetrameric GINS complex. Interacts with ANKRD17. Interacts with MCMBP. Interacts with TONSL; the interaction is direct.

It is found in the nucleus. Its subcellular location is the chromosome. It catalyses the reaction ATP + H2O = ADP + phosphate + H(+). Functionally, acts as a component of the MCM2-7 complex (MCM complex) which is the replicative helicase essential for 'once per cell cycle' DNA replication initiation and elongation in eukaryotic cells. Core component of CDC45-MCM-GINS (CMG) helicase, the molecular machine that unwinds template DNA during replication, and around which the replisome is built. The active ATPase sites in the MCM2-7 ring are formed through the interaction surfaces of two neighboring subunits such that a critical structure of a conserved arginine finger motif is provided in trans relative to the ATP-binding site of the Walker A box of the adjacent subunit. The six ATPase active sites, however, are likely to contribute differentially to the complex helicase activity. The protein is DNA replication licensing factor MCM5 (MCM5) of Homo sapiens (Human).